We begin with the raw amino-acid sequence, 401 residues long: Nicotinamide/nicotinic acid mononucleotide adenylyltransferase 1 (401 aa).

2 disordered regions span residues 1–30 (MDPT…KIPK) and 48–123 (APFN…RGVQ). Residues 52–69 (IKRKKKHPKHHHHHHHSR) are compositionally biased toward basic residues. 4 positions are modified to phosphoserine: serine 91, serine 95, serine 96, and serine 111. Serine 173 and phenylalanine 174 together coordinate NAD(+). Histidine 181 contributes to the ATP binding site. NAD(+)-binding residues include threonine 253, glycine 288, aspartate 290, tryptophan 301, arginine 320, and asparagine 351. Position 356–359 (356–359 (TKVR)) interacts with ATP.

It belongs to the eukaryotic NMN adenylyltransferase family. As to quaternary structure, homotetramer. It depends on Ni(2+) as a cofactor.

It is found in the cytoplasm. The protein resides in the nucleus. It carries out the reaction beta-nicotinamide D-ribonucleotide + ATP + H(+) = diphosphate + NAD(+). It catalyses the reaction nicotinate beta-D-ribonucleotide + ATP + H(+) = deamido-NAD(+) + diphosphate. The protein operates within cofactor biosynthesis; NAD(+) biosynthesis; deamido-NAD(+) from nicotinate D-ribonucleotide: step 1/1. It functions in the pathway cofactor biosynthesis; NAD(+) biosynthesis; NAD(+) from nicotinamide D-ribonucleotide: step 1/1. In terms of biological role, catalyzes the formation of NAD(+) from nicotinamide mononucleotide (NMN) and ATP. Can also use the deamidated form; nicotinic acid mononucleotide (NaMN) as substrate to form deamido-NAD(+) (NaAD). Key enzyme in both de novo and salvage pathways for NAD(+) biosynthesis. Predominantly acts in the salvage pathways via NMN. In Saccharomyces cerevisiae (strain ATCC 204508 / S288c) (Baker's yeast), this protein is Nicotinamide/nicotinic acid mononucleotide adenylyltransferase 1.